A 388-amino-acid polypeptide reads, in one-letter code: GDP-4-keto-6-deoxy-D-mannose 3-dehydratase (388 aa).

26 to 29 is a binding site for GDP-4-dehydro-alpha-D-rhamnose; it reads KMFT. Residues 49-69 form a helical membrane-spanning segment; the sequence is YAVMVSSGSTANLLMIAALFF. Pyridoxal 5'-phosphate contacts are provided by residues 56 to 57, Trp88, Glu162, and Ser183; that span reads GS. His188 (proton donor/acceptor) is an active-site residue. Residue His215 coordinates L-glutamate. Arg219 lines the GDP-4-dehydro-alpha-D-rhamnose pocket. Asn248 serves as a coordination point for pyridoxal 5'-phosphate. Residue Arg250 coordinates L-glutamate. Position 329 (Glu329) interacts with GDP-4-dehydro-alpha-D-rhamnose.

The protein belongs to the DegT/DnrJ/EryC1 family. As to quaternary structure, homodimer. Pyridoxal 5'-phosphate serves as cofactor.

The protein resides in the cell membrane. It catalyses the reaction GDP-4-dehydro-alpha-D-rhamnose + L-glutamate = GDP-4-dehydro-3,6-dideoxy-alpha-D-mannose + 2-oxoglutarate + NH4(+). It functions in the pathway nucleotide-sugar metabolism; GDP-L-colitose biosynthesis. Its function is as follows. Involved in the biosynthesis of L-colitose, a 3,6-dideoxyhexose present in the O-antigen region of lipopolysaccharides (LPS), where it serves as an antigenic determinant and is vital for bacterial defense and survival. Catalyzes the removal of the C3'-hydroxyl group from GDP-4-keto-6-deoxy-D-mannose via a combined transamination-deoxygenation reaction. The catalysis is initiated by a transamination step in which pyridoxal 5'-phosphate (PLP) is converted to pyridoxamine 5'-phosphate (PMP) in the presence of L-glutamate. This coenzyme then forms a Schiff base with GDP-4-keto-6-deoxy-D-mannose and the resulting adduct undergoes a PMP-mediated beta-dehydration reaction to give a sugar enamine intermediate, which after tautomerization and hydrolysis to release ammonia yields GDP-4-keto-3,6-dideoxy-D-mannose as a product. In vitro, is able to catalyze the formation of GDP-4-keto-3,6-dideoxymannose using GDP-perosamine rather than GDP-4-keto-6-deoxymannose as a substrate, with no need of glutamate. The chain is GDP-4-keto-6-deoxy-D-mannose 3-dehydratase from Escherichia coli O55:H7 (strain CB9615 / EPEC).